The primary structure comprises 165 residues: Large ribosomal subunit protein uL10 (165 aa).

The protein belongs to the universal ribosomal protein uL10 family. In terms of assembly, part of the ribosomal stalk of the 50S ribosomal subunit. The N-terminus interacts with L11 and the large rRNA to form the base of the stalk. The C-terminus forms an elongated spine to which L12 dimers bind in a sequential fashion forming a multimeric L10(L12)X complex.

Functionally, forms part of the ribosomal stalk, playing a central role in the interaction of the ribosome with GTP-bound translation factors. In Borrelia turicatae (strain 91E135), this protein is Large ribosomal subunit protein uL10.